The sequence spans 209 residues: N-(5'-phosphoribosyl)anthranilate isomerase (209 aa).

Belongs to the TrpF family.

It catalyses the reaction N-(5-phospho-beta-D-ribosyl)anthranilate = 1-(2-carboxyphenylamino)-1-deoxy-D-ribulose 5-phosphate. Its pathway is amino-acid biosynthesis; L-tryptophan biosynthesis; L-tryptophan from chorismate: step 3/5. This Pelobacter propionicus (strain DSM 2379 / NBRC 103807 / OttBd1) protein is N-(5'-phosphoribosyl)anthranilate isomerase.